Reading from the N-terminus, the 377-residue chain is Flagellar P-ring protein (377 aa).

Positions 1-33 (MRYPVSTGIAAPAWFAFFCAWAGLWTFSLPVQA) are cleaved as a signal peptide.

It belongs to the FlgI family. In terms of assembly, the basal body constitutes a major portion of the flagellar organelle and consists of four rings (L,P,S, and M) mounted on a central rod.

The protein resides in the periplasm. It is found in the bacterial flagellum basal body. Assembles around the rod to form the L-ring and probably protects the motor/basal body from shearing forces during rotation. The sequence is that of Flagellar P-ring protein from Nitrosospira multiformis (strain ATCC 25196 / NCIMB 11849 / C 71).